A 353-amino-acid polypeptide reads, in one-letter code: Small ribosomal subunit protein uS2 (353 aa).

Positions 256-353 are disordered; sequence DTDEQSSAAN…TPAESTDEQA (98 aa). 2 stretches are compositionally biased toward low complexity: residues 263-311 and 321-339; these read AANT…AEAP and ESATPAEAEVEAESATPAE. A compositionally biased stretch (acidic residues) spans 340–353; it reads AEAETPAESTDEQA.

Belongs to the universal ribosomal protein uS2 family.

In Beutenbergia cavernae (strain ATCC BAA-8 / DSM 12333 / CCUG 43141 / JCM 11478 / NBRC 16432 / NCIMB 13614 / HKI 0122), this protein is Small ribosomal subunit protein uS2.